The sequence spans 475 residues: Ribulose bisphosphate carboxylase large chain (475 aa).

The propeptide occupies 1–2; it reads MS. Pro-3 is subject to N-acetylproline. Lys-14 carries the N6,N6,N6-trimethyllysine modification. Substrate contacts are provided by Asn-123 and Thr-173. Residue Lys-175 is the Proton acceptor of the active site. Lys-177 is a substrate binding site. Mg(2+) is bound by residues Lys-201, Asp-203, and Glu-204. Lys-201 carries the post-translational modification N6-carboxylysine. Residue His-294 is the Proton acceptor of the active site. Substrate-binding residues include Arg-295, His-327, and Ser-379.

It belongs to the RuBisCO large chain family. Type I subfamily. In terms of assembly, heterohexadecamer of 8 large chains and 8 small chains; disulfide-linked. The disulfide link is formed within the large subunit homodimers. Requires Mg(2+) as cofactor. In terms of processing, the disulfide bond which can form in the large chain dimeric partners within the hexadecamer appears to be associated with oxidative stress and protein turnover.

The protein resides in the plastid. It localises to the chloroplast. The catalysed reaction is 2 (2R)-3-phosphoglycerate + 2 H(+) = D-ribulose 1,5-bisphosphate + CO2 + H2O. It catalyses the reaction D-ribulose 1,5-bisphosphate + O2 = 2-phosphoglycolate + (2R)-3-phosphoglycerate + 2 H(+). In terms of biological role, ruBisCO catalyzes two reactions: the carboxylation of D-ribulose 1,5-bisphosphate, the primary event in carbon dioxide fixation, as well as the oxidative fragmentation of the pentose substrate in the photorespiration process. Both reactions occur simultaneously and in competition at the same active site. In Pinus edulis (Pinyon pine), this protein is Ribulose bisphosphate carboxylase large chain.